We begin with the raw amino-acid sequence, 776 residues long: Lysyl oxidase homolog 2 (776 aa).

The first 25 residues, 1 to 25 (MEIPFGSCLYSCLALLVLLPSLSLA), serve as a signal peptide directing secretion. SRCR domains follow at residues 61 to 162 (VRLA…VVCS), 191 to 305 (IRPI…VSCV), 329 to 428 (VRLR…VRCN), and 438 to 546 (VRLN…VACS). 9 disulfides stabilise this stretch: Cys87–Cys151, Cys100–Cys161, Cys131–Cys141, Cys221–Cys294, Cys234–Cys304, Cys268–Cys278, Cys354–Cys417, Cys367–Cys427, and Cys398–Cys408. The N-linked (GlcNAc...) asparagine glycan is linked to Asn267. Asn291 carries an N-linked (GlcNAc...) asparagine glycan. The N-linked (GlcNAc...) asparagine glycan is linked to Asn458. 3 disulfides stabilise this stretch: Cys467-Cys532, Cys480-Cys545, and Cys514-Cys524. A lysyl-oxidase like region spans residues 550 to 753 (PDLVLNAEIV…WMYNCHVGGA (204 aa)). Residues Asp551 and Leu552 each contribute to the Ca(2+) site. 4 disulfide bridges follow: Cys575/Cys627, Cys581/Cys697, Cys659/Cys675, and Cys665/Cys687. His628, His630, and His632 together coordinate Cu cation. Asn646 is a glycosylation site (N-linked (GlcNAc...) asparagine). Positions 655 to 691 (KASFCLEDTECEGDIQKSYECANFGEQGITMGCWDMY) form a cross-link, lysine tyrosylquinone (Lys-Tyr). Tyr691 bears the 2',4',5'-topaquinone mark. Ca(2+)-binding residues include Glu724, Asp726, Asn729, and Asn730. The cysteines at positions 734 and 748 are disulfide-linked.

Belongs to the lysyl oxidase family. In terms of assembly, component of some chromatin repressor complex. Interacts with SNAI1. Interacts with TAF10. Interacts with HSPA5. Interacts with EFEMP2. It depends on Cu cation as a cofactor. Lysine tyrosylquinone residue is required as a cofactor. Post-translationally, the lysine tyrosylquinone cross-link (LTQ) is generated by condensation of the epsilon-amino group of a lysine with a topaquinone produced by oxidation of tyrosine. N-glycosylated. N-glycosylation on Asn-458 and Asn-646 may be essential for proper folding and secretion; may be composed of a fucosylated carbohydrates attached to a trimannose N-linked glycan core.

It localises to the secreted. Its subcellular location is the extracellular space. The protein localises to the extracellular matrix. It is found in the basement membrane. The protein resides in the nucleus. It localises to the chromosome. Its subcellular location is the endoplasmic reticulum. The catalysed reaction is L-lysyl-[protein] + O2 + H2O = (S)-2-amino-6-oxohexanoyl-[protein] + H2O2 + NH4(+). Specifically inhibited by a mouse monoclonal antibody AB0023, inhibition occurs in a non-competitive manner. Functionally, mediates the post-translational oxidative deamination of lysine residues on target proteins leading to the formation of deaminated lysine (allysine). Acts as a transcription corepressor and specifically mediates deamination of trimethylated 'Lys-4' of histone H3 (H3K4me3), a specific tag for epigenetic transcriptional activation. Shows no activity against histone H3 when it is trimethylated on 'Lys-9' (H3K9me3) or 'Lys-27' (H3K27me3) or when 'Lys-4' is monomethylated (H3K4me1) or dimethylated (H3K4me2). Also mediates deamination of methylated TAF10, a member of the transcription factor IID (TFIID) complex, which induces release of TAF10 from promoters, leading to inhibition of TFIID-dependent transcription. LOXL2-mediated deamination of TAF10 results in transcriptional repression of genes required for embryonic stem cell pluripotency including POU5F1/OCT4, NANOG, KLF4 and SOX2. Involved in epithelial to mesenchymal transition (EMT) via interaction with SNAI1 and participates in repression of E-cadherin CDH1, probably by mediating deamination of histone H3. During EMT, involved with SNAI1 in negatively regulating pericentromeric heterochromatin transcription. SNAI1 recruits LOXL2 to pericentromeric regions to oxidize histone H3 and repress transcription which leads to release of heterochromatin component CBX5/HP1A, enabling chromatin reorganization and acquisition of mesenchymal traits. Interacts with the endoplasmic reticulum protein HSPA5 which activates the IRE1-XBP1 pathway of the unfolded protein response, leading to expression of several transcription factors involved in EMT and subsequent EMT induction. When secreted into the extracellular matrix, promotes cross-linking of extracellular matrix proteins by mediating oxidative deamination of peptidyl lysine residues in precursors to fibrous collagen and elastin. Acts as a regulator of sprouting angiogenesis, probably via collagen IV scaffolding. Acts as a regulator of chondrocyte differentiation, probably by regulating expression of factors that control chondrocyte differentiation. This chain is Lysyl oxidase homolog 2 (Loxl2), found in Rattus norvegicus (Rat).